A 112-amino-acid chain; its full sequence is uncharacterized protein (112 aa).

This is an uncharacterized protein from Archaeoglobus fulgidus (strain ATCC 49558 / DSM 4304 / JCM 9628 / NBRC 100126 / VC-16).